Here is a 451-residue protein sequence, read N- to C-terminus: Uronate isomerase (451 aa).

The protein belongs to the metallo-dependent hydrolases superfamily. Uronate isomerase family. Homotrimer.

It carries out the reaction D-glucuronate = D-fructuronate. The catalysed reaction is aldehydo-D-galacturonate = keto-D-tagaturonate. It functions in the pathway carbohydrate metabolism; pentose and glucuronate interconversion. The sequence is that of Uronate isomerase from Thermotoga maritima (strain ATCC 43589 / DSM 3109 / JCM 10099 / NBRC 100826 / MSB8).